A 526-amino-acid polypeptide reads, in one-letter code: Acetyl-CoA hydrolase (526 aa).

277–281 (GIGNI) lines the CoA pocket. Catalysis depends on E302, which acts as the 5-glutamyl coenzyme A thioester intermediate. CoA contacts are provided by N392 and G396.

The protein belongs to the acetyl-CoA hydrolase/transferase family.

The protein localises to the cytoplasm. The catalysed reaction is acetyl-CoA + H2O = acetate + CoA + H(+). In terms of biological role, presumably involved in regulating the intracellular acetyl-CoA pool for fatty acid and cholesterol synthesis and fatty acid oxidation. The polypeptide is Acetyl-CoA hydrolase (ACH1) (Candida glabrata (strain ATCC 2001 / BCRC 20586 / JCM 3761 / NBRC 0622 / NRRL Y-65 / CBS 138) (Yeast)).